The following is a 162-amino-acid chain: NADH-quinone oxidoreductase subunit I (162 aa).

4Fe-4S ferredoxin-type domains follow at residues 53 to 83 and 93 to 122; these read LRRY…IEAE and TRYD…EGPN. Cys63, Cys66, Cys69, Cys73, Cys102, Cys105, Cys108, and Cys112 together coordinate [4Fe-4S] cluster.

The protein belongs to the complex I 23 kDa subunit family. As to quaternary structure, NDH-1 is composed of 14 different subunits. Subunits NuoA, H, J, K, L, M, N constitute the membrane sector of the complex. It depends on [4Fe-4S] cluster as a cofactor.

It is found in the cell inner membrane. It catalyses the reaction a quinone + NADH + 5 H(+)(in) = a quinol + NAD(+) + 4 H(+)(out). Functionally, NDH-1 shuttles electrons from NADH, via FMN and iron-sulfur (Fe-S) centers, to quinones in the respiratory chain. The immediate electron acceptor for the enzyme in this species is believed to be ubiquinone. Couples the redox reaction to proton translocation (for every two electrons transferred, four hydrogen ions are translocated across the cytoplasmic membrane), and thus conserves the redox energy in a proton gradient. This chain is NADH-quinone oxidoreductase subunit I, found in Rhodospirillum rubrum (strain ATCC 11170 / ATH 1.1.1 / DSM 467 / LMG 4362 / NCIMB 8255 / S1).